Consider the following 433-residue polypeptide: FAD-dependent monooxygenase notI' (433 aa).

The FAD site is built by E45 and R117. The active site involves R195. The FAD site is built by D314 and A327.

This sequence belongs to the paxM FAD-dependent monooxygenase family. The cofactor is FAD.

It functions in the pathway alkaloid biosynthesis. Functionally, FAD-dependent monooxygenase; part of the gene cluster that mediates the biosynthesis of notoamide, a fungal indole alkaloid that belongs to a family of natural products containing a characteristic bicyclo[2.2.2]diazaoctane core. The first step of notoamide biosynthesis involves coupling of L-proline and L-tryptophan by the bimodular NRPS notE', to produce cyclo-L-tryptophan-L-proline called brevianamide F. The reverse prenyltransferase notF' then acts as a deoxybrevianamide E synthase and converts brevianamide F to deoxybrevianamide E via reverse prenylation at C-2 of the indole ring leading to the bicyclo[2.2.2]diazaoctane core. Deoxybrevianamide E is further hydroxylated at C-6 of the indole ring, likely catalyzed by the cytochrome P450 monooxygenase notG', to yield 6-hydroxy-deoxybrevianamide E. 6-hydroxy-deoxybrevianamide E is a specific substrate of the prenyltransferase notC' for normal prenylation at C-7 to produce 6-hydroxy-7-prenyl-deoxybrevianamide, also called notoamide S. As the proposed pivotal branching point in notoamide biosynthesis, notoamide S can be diverted to notoamide E through an oxidative pyran ring closure putatively catalyzed by either notH' cytochrome P450 monooxygenase or the notD' FAD-linked oxidoreductase. This step would be followed by an indole 2,3-epoxidation-initiated pinacol-like rearrangement catalyzed by the notB' FAD-dependent monooxygenase leading to the formation of notoamide C and notoamide D. On the other hand notoamide S is converted to notoamide T by notH' (or notD'), a bifunctional oxidase that also functions as the intramolecular Diels-Alderase responsible for generation of (-)-notoamide T. To generate antipodal (+)-notoaminide T, notH (or notD) in Aspergillus strain MF297-2 is expected to catalyze a Diels-Alder reaction leading to the opposite stereochemistry. The remaining oxidoreductase notD' (or notH') likely catalyzes the oxidative pyran ring formation to yield (-)-stephacidin A. The FAD-dependent monooxygenase notI' is highly similar to notB' and is predicted to catalyze a similar conversion from (-)-stephacidin A to (+)-notoamide B via the 2,3-epoxidation of (-)-stephacidin A followed by a pinacol-type rearrangement. Finally, it remains unclear which enzyme could be responsible for the final hydroxylation steps leading to notoamide A and sclerotiamide. This Aspergillus versicolor protein is FAD-dependent monooxygenase notI'.